We begin with the raw amino-acid sequence, 578 residues long: Arginine--tRNA ligase (578 aa).

The 'HIGH' region signature appears at 127–137 (PNLAKEMHVGH).

This sequence belongs to the class-I aminoacyl-tRNA synthetase family. In terms of assembly, monomer.

It localises to the cytoplasm. The catalysed reaction is tRNA(Arg) + L-arginine + ATP = L-arginyl-tRNA(Arg) + AMP + diphosphate. In Pseudomonas syringae pv. tomato (strain ATCC BAA-871 / DC3000), this protein is Arginine--tRNA ligase.